We begin with the raw amino-acid sequence, 262 residues long: Ribosome-recycling factor, mitochondrial (262 aa).

The transit peptide at 1–55 (MALGLKCFRMVHPTFRNYLAASIRPVSEVTLKTVHERQHGHRQYMAYSAVPVRHF) directs the protein to the mitochondrion.

The protein belongs to the RRF family.

The protein localises to the mitochondrion. In terms of biological role, responsible for the disassembly of ribosomes from messenger RNA at the termination of mitochondrial protein biosynthesis. Acts in collaboration with GFM2. Promotes mitochondrial ribosome recycling by dissolution of intersubunit contacts. The polypeptide is Ribosome-recycling factor, mitochondrial (Homo sapiens (Human)).